The chain runs to 412 residues: Putative competence-damage inducible protein (412 aa).

It belongs to the CinA family.

The protein is Putative competence-damage inducible protein of Bacillus mycoides (strain KBAB4) (Bacillus weihenstephanensis).